A 237-amino-acid polypeptide reads, in one-letter code: Sulfhydrogenase 2 subunit delta (237 aa).

Positions 11, 14, 83, 132, 160, 163, 170, and 179 each coordinate [4Fe-4S] cluster. [3Fe-4S] cluster is bound by residues Cys188, Cys192, Cys199, and Cys202.

Belongs to the [NiFe]/[NiFeSe] hydrogenase small subunit family. As to quaternary structure, dimer of heterotetramer of alpha, beta, gamma and delta subunits. The nickel-containing alpha and delta subunits constitute the hydrogenase activity. The beta and gamma subunits (flavin-containing dimer) constitute the sulfur reductase activity. It depends on Ni(2+) as a cofactor. Requires [4Fe-4S] cluster as cofactor. The cofactor is [3Fe-4S] cluster.

Its subcellular location is the cytoplasm. The enzyme catalyses H2 + NADP(+) = NADPH + H(+). The catalysed reaction is H2 + NAD(+) = NADH + H(+). Functionally, part of a bifunctional enzyme complex that functions as a hydrogen-evolving hydrogenase with sulfur-reducing activity. May play a role in hydrogen cycling during fermentative growth. Activity exhibited with NAD in addition to NADPH. The alpha and delta subunits form the hydrogenase component that catalyzes the reduction of protons to evolve hydrogen. This is Sulfhydrogenase 2 subunit delta from Pyrococcus furiosus (strain ATCC 43587 / DSM 3638 / JCM 8422 / Vc1).